We begin with the raw amino-acid sequence, 340 residues long: N-acetyl-gamma-glutamyl-phosphate reductase (340 aa).

The active site involves Cys-146.

The protein belongs to the NAGSA dehydrogenase family. Type 1 subfamily.

The protein resides in the cytoplasm. It catalyses the reaction N-acetyl-L-glutamate 5-semialdehyde + phosphate + NADP(+) = N-acetyl-L-glutamyl 5-phosphate + NADPH + H(+). It participates in amino-acid biosynthesis; L-arginine biosynthesis; N(2)-acetyl-L-ornithine from L-glutamate: step 3/4. Catalyzes the NADPH-dependent reduction of N-acetyl-5-glutamyl phosphate to yield N-acetyl-L-glutamate 5-semialdehyde. The polypeptide is N-acetyl-gamma-glutamyl-phosphate reductase (Streptococcus sanguinis (strain SK36)).